Here is a 766-residue protein sequence, read N- to C-terminus: Signal transducer and activator of transcription 3.2 (766 aa).

Positions 150-162 match the Essential for nuclear import motif; the sequence is DVRKKVQDLEQKM. Positions 580-670 constitute an SH2 domain; the sequence is WNEGYIIGFI…DATNILVSPL (91 aa). S725 carries the post-translational modification Phosphoserine; by NLK.

The protein belongs to the transcription factor STAT family. As to quaternary structure, forms a homodimer or a heterodimer with a related family member. Interacts with nlk.2. Phosphorylation of both tyrosine and serine residues, together with dimerization, is required for mesoderm induction.

Its subcellular location is the cytoplasm. The protein localises to the nucleus. Transcription factor that binds to target promoter sequences and activates transcription upon il6st/gp130 stimulation. Mediates ventralization of embryos, at least in part via inhibition of smad2 signaling. Required for hairy2 to induce dll1/delta1 and promote neural crest cell proliferation and differentiation. Involved in TGFbeta-mediated mesoderm induction in early embryos, acting downstream of map3k7/tak1 and nlk.2. The polypeptide is Signal transducer and activator of transcription 3.2 (stat3.2) (Xenopus laevis (African clawed frog)).